The sequence spans 872 residues: MKSTFLLLLLLLSLNLLFVFVSCASSIEFVYPNFTASNLRFVDSSKGAFLLSRNSIFKAGLFSPGGDDSSTGFYFSVVHVDSGSTIWSSNRDSPVSSSGTMNLTPQGISVIEDGKSQIPVWSTPVLASPVKSLRLTDAGNLLLLDHLNVSLWESFDFPTDSIVLGQRLKLGMFLSGSVSRSDFSTGDYKFLVGESDGLMQWRGQNYWKLRMHIRANVDSNFPVEYLTVTTSGLALMARNGTVVVVRVALPPSSDFRVAKMDSSGKFIVSRFSGKNLVTEFSGPMDSCQIPFVCGKLGLCNLDNASENQSCSCPDEMRMDAGKGVCVPVSQSLSLPVSCEARNISYLELGLGVSYFSTHFTDPVEHGLPLLACHDICSKNCSCLGVFYENTSRSCYLVKDSFGSLSLVKNSPENHDLIGYVKLSIRKTNAQPPGNNNRGGSSFPVIALVLLPCSGFFLLIALGLLWWRRCAVMRYSSIREKQVTRPGSFESGDLGSFHIPGLPQKFEFEELEQATENFKMQIGSGGFGSVYKGTLPDETLIAVKKITNHGLHGRQEFCTEIAIIGNIRHTNLVKLRGFCARGRQLLLVYEYMNHGSLEKTLFSGNGPVLEWQERFDIALGTARGLAYLHSGCDQKIIHCDVKPENILLHDHFQPKISDFGLSKLLNQEESSLFTTMRGTRGYLAPEWITNAAISEKADVYSYGMVLLELVSGRKNCSFRSRSNSVTEDNNQNHSSTTTTSTGLVYFPLYALDMHEQGRYMELADPRLEGRVTSQEAEKLVRIALCCVHEEPALRPTMAAVVGMFEGSIPLGNPRMESLNFLRFYGLRFAESSMVEGQNGESETMVFHRRESSNSGGSRQSASYIASQEVSGPR.

The first 26 residues, 1-26 (MKSTFLLLLLLLSLNLLFVFVSCASS), serve as a signal peptide directing secretion. Residues 27–443 (IEFVYPNFTA…NNNRGGSSFP (417 aa)) lie on the Extracellular side of the membrane. Residues asparagine 33, asparagine 148, and asparagine 239 are each glycosylated (N-linked (GlcNAc...) asparagine). Residues 35–156 (TASNLRFVDS…LNVSLWESFD (122 aa)) enclose the Bulb-type lectin domain. Residues 283 to 322 (PMDSCQIPFVCGKLGLCNLDNASENQSCSCPDEMRMDAGK) enclose the EGF-like; atypical domain. 2 disulfide bridges follow: cysteine 287/cysteine 299 and cysteine 293/cysteine 310. N-linked (GlcNAc...) asparagine glycosylation is found at asparagine 303, asparagine 307, asparagine 342, asparagine 379, and asparagine 389. Residues 338–423 (CEARNISYLE…HDLIGYVKLS (86 aa)) form the PAN domain. Disulfide bonds link cysteine 372–cysteine 394 and cysteine 376–cysteine 382. The helical transmembrane segment at 444 to 464 (VIALVLLPCSGFFLLIALGLL) threads the bilayer. Topologically, residues 465–872 (WWRRCAVMRY…IASQEVSGPR (408 aa)) are cytoplasmic. Residues 515–814 (ENFKMQIGSG…GSIPLGNPRM (300 aa)) enclose the Protein kinase domain. Residues 521 to 529 (IGSGGFGSV) and lysine 543 each bind ATP. The interval 603 to 620 (GNGPVLEWQERFDIALGT) is caM-binding. Aspartate 639 acts as the Proton acceptor in catalysis. The residue at position 656 (serine 656) is a Phosphoserine. Threonine 673 carries the post-translational modification Phosphothreonine. Residues serine 716 and serine 859 each carry the phosphoserine modification. Positions 836–872 (QNGESETMVFHRRESSNSGGSRQSASYIASQEVSGPR) are disordered. Low complexity predominate over residues 851-861 (SNSGGSRQSAS). A compositionally biased stretch (polar residues) spans 862-872 (YIASQEVSGPR).

This sequence belongs to the protein kinase superfamily. Ser/Thr protein kinase family.

It is found in the cell membrane. It catalyses the reaction L-seryl-[protein] + ATP = O-phospho-L-seryl-[protein] + ADP + H(+). The enzyme catalyses L-threonyl-[protein] + ATP = O-phospho-L-threonyl-[protein] + ADP + H(+). This is G-type lectin S-receptor-like serine/threonine-protein kinase At5g35370 from Arabidopsis thaliana (Mouse-ear cress).